The primary structure comprises 128 residues: Transcription antitermination protein NusB (128 aa).

Belongs to the NusB family.

Involved in transcription antitermination. Required for transcription of ribosomal RNA (rRNA) genes. Binds specifically to the boxA antiterminator sequence of the ribosomal RNA (rrn) operons. This chain is Transcription antitermination protein NusB, found in Listeria welshimeri serovar 6b (strain ATCC 35897 / DSM 20650 / CCUG 15529 / CIP 8149 / NCTC 11857 / SLCC 5334 / V8).